The primary structure comprises 549 residues: Serine/threonine-protein phosphatase PPQ (549 aa).

Residues 1-13 (MRRSPSRSNNNFA) are compositionally biased toward polar residues. Disordered regions lie at residues 1-50 (MRRS…RSLP), 64-85 (YNTLASAGKNNNNKRASNDNLL), 133-158 (TSSTTTATTSNNILTSPSYRESNYSS), and 189-219 (SRVKSPSSSVKAGSFGAPSSPTSGIPNPKSS). Low complexity-rich tracts occupy residues 16-32 (NCSTNSNSSQQQLTTPS) and 68-83 (ASAGKNNNNKRASNDN). Polar residues predominate over residues 205–217 (APSSPTSGIPNPK). Positions 301, 303, 329, and 361 each coordinate Mn(2+). The Proton donor role is filled by His362. Mn(2+) is bound by residues His410 and His485.

The protein belongs to the PPP phosphatase family. PP-Z subfamily. Mn(2+) is required as a cofactor.

It carries out the reaction O-phospho-L-seryl-[protein] + H2O = L-seryl-[protein] + phosphate. The catalysed reaction is O-phospho-L-threonyl-[protein] + H2O = L-threonyl-[protein] + phosphate. Phosphatase involved in the regulation of protein synthesis. Affects translational accuracy. The polypeptide is Serine/threonine-protein phosphatase PPQ (PPQ1) (Saccharomyces cerevisiae (strain ATCC 204508 / S288c) (Baker's yeast)).